A 297-amino-acid polypeptide reads, in one-letter code: Acetaldehyde dehydrogenase (297 aa).

18–21 (TGNI) serves as a coordination point for NAD(+). C133 acts as the Acyl-thioester intermediate in catalysis. NAD(+) contacts are provided by residues 165 to 173 (SAGPATRLN) and N275.

The protein belongs to the acetaldehyde dehydrogenase family.

The catalysed reaction is acetaldehyde + NAD(+) + CoA = acetyl-CoA + NADH + H(+). The sequence is that of Acetaldehyde dehydrogenase from Spirochaeta aurantia.